The sequence spans 251 residues: Protein unc-119 homolog B (251 aa).

The span at 1–13 (MSGSNPKAATAGS) shows a compositional bias: polar residues. Residues 1-56 (MSGSNPKAATAGSQAGPGGLVAGKEEKKKAGGGVLNRLKARRQGPPHTPDDGSGAA) form a disordered region. S2 carries the post-translational modification N-acetylserine. K24 carries the post-translational modification N6-acetyllysine. Position 142 (Y142) interacts with tetradecanoate.

The protein belongs to the PDE6D/unc-119 family. Found in a complex with ARL3, RP2 and UNC119B; RP2 induces hydrolysis of GTP ARL3 in the complex, leading to the release of UNC119B. Interacts with NPHP3 (when myristoylated). Interacts with CYS1 (when myristoylated). Interacts with MACIR; interaction only takes place when UNC119B is not liganded with myristoylated proteins.

The protein localises to the cell projection. Its subcellular location is the cilium. Its function is as follows. Myristoyl-binding protein that acts as a cargo adapter: specifically binds the myristoyl moiety of a subset of N-terminally myristoylated proteins and is required for their localization. Binds myristoylated NPHP3 and plays a key role in localization of NPHP3 to the primary cilium membrane. Does not bind all myristoylated proteins. Probably plays a role in trafficking proteins in photoreceptor cells. In Mus musculus (Mouse), this protein is Protein unc-119 homolog B (Unc119b).